The chain runs to 301 residues: UDP-N-acetylenolpyruvoylglucosamine reductase (301 aa).

An FAD-binding PCMH-type domain is found at 24–190 (RVGGLAQFYD…VSAQLQLQPG (167 aa)). Arg-169 is an active-site residue. Residue Ser-220 is the Proton donor of the active site. Glu-290 is an active-site residue.

The protein belongs to the MurB family. It depends on FAD as a cofactor.

It localises to the cytoplasm. The catalysed reaction is UDP-N-acetyl-alpha-D-muramate + NADP(+) = UDP-N-acetyl-3-O-(1-carboxyvinyl)-alpha-D-glucosamine + NADPH + H(+). The protein operates within cell wall biogenesis; peptidoglycan biosynthesis. In terms of biological role, cell wall formation. This Synechococcus sp. (strain ATCC 27144 / PCC 6301 / SAUG 1402/1) (Anacystis nidulans) protein is UDP-N-acetylenolpyruvoylglucosamine reductase.